Here is a 301-residue protein sequence, read N- to C-terminus: Protoheme IX farnesyltransferase (301 aa).

Helical transmembrane passes span 20–42, 55–75, 105–125, 126–146, 150–172, 176–198, 227–247, 249–269, and 280–300; these read FTEL…GMWL, VDVI…SGAF, ALMV…MTTW, QAGV…SLYA, LVSN…WFAV, FSIV…FYAI, MFFW…LGLV, VILA…GFKM, and FVYS…ISIF.

This sequence belongs to the UbiA prenyltransferase family. Protoheme IX farnesyltransferase subfamily. In terms of assembly, interacts with CtaA.

The protein resides in the cell membrane. The enzyme catalyses heme b + (2E,6E)-farnesyl diphosphate + H2O = Fe(II)-heme o + diphosphate. The protein operates within porphyrin-containing compound metabolism; heme O biosynthesis; heme O from protoheme: step 1/1. In terms of biological role, converts heme B (protoheme IX) to heme O by substitution of the vinyl group on carbon 2 of heme B porphyrin ring with a hydroxyethyl farnesyl side group. This is Protoheme IX farnesyltransferase from Listeria innocua serovar 6a (strain ATCC BAA-680 / CLIP 11262).